The chain runs to 206 residues: Orotate phosphoribosyltransferase (206 aa).

5-phospho-alpha-D-ribose 1-diphosphate contacts are provided by residues Arg-93, Lys-97, His-99, and 119 to 127 (EDLISTGGT). Residue Ser-123 participates in orotate binding.

It belongs to the purine/pyrimidine phosphoribosyltransferase family. PyrE subfamily. In terms of assembly, homodimer. It depends on Mg(2+) as a cofactor.

It catalyses the reaction orotidine 5'-phosphate + diphosphate = orotate + 5-phospho-alpha-D-ribose 1-diphosphate. It participates in pyrimidine metabolism; UMP biosynthesis via de novo pathway; UMP from orotate: step 1/2. Functionally, catalyzes the transfer of a ribosyl phosphate group from 5-phosphoribose 1-diphosphate to orotate, leading to the formation of orotidine monophosphate (OMP). The sequence is that of Orotate phosphoribosyltransferase from Bacillus caldolyticus.